The following is a 221-amino-acid chain: GTP-binding nuclear protein Ran-A1 (221 aa).

One can recognise a Small GTPase Ran-type domain in the interval 10 to 174 (DYPSFKLVIV…LYLARKLAGD (165 aa)). 21–28 (DGGTGKTT) serves as a coordination point for GTP. Residues 40 to 48 (KKYEPTIGV) form a switch-I region. GTP is bound by residues Gly71, 125–128 (NKVD), and 153–155 (SAK). Positions 71–87 (GQEKFGGLRDGYYIHGQ) are switch-II. Residues 199-208 (QHEAELAAAA) show a composition bias toward low complexity. The segment at 199 to 221 (QHEAELAAAASQPLPDDDDETFD) is disordered.

Belongs to the small GTPase superfamily. Ran family. Found in a nuclear export complex with RanGTP, exportin and pre-miRNA.

The protein resides in the nucleus. Its function is as follows. GTP-binding protein involved in nucleocytoplasmic transport. Required for the import of protein into the nucleus and also for RNA export. Involved in chromatin condensation and control of cell cycle. This Nicotiana tabacum (Common tobacco) protein is GTP-binding nuclear protein Ran-A1 (RAN-A1).